The following is a 325-amino-acid chain: Probable cell division protein WhiA (325 aa).

The H-T-H motif DNA-binding region spans 280-313; the sequence is SLKELGSMLKNPLGKSGVNHRLRKIDKIAEELRK.

It belongs to the WhiA family.

In terms of biological role, involved in cell division and chromosome segregation. This chain is Probable cell division protein WhiA, found in Caldicellulosiruptor saccharolyticus (strain ATCC 43494 / DSM 8903 / Tp8T 6331).